A 334-amino-acid chain; its full sequence is Cysteine and histidine-rich domain-containing protein 1 (334 aa).

16 residues coordinate Zn(2+): Cys-5, Cys-10, Cys-24, His-27, Cys-42, Cys-43, Cys-59, His-64, Cys-156, Cys-161, Cys-175, His-178, Cys-193, Cys-194, Cys-210, and His-215. CHORD domains lie at 5-64 and 156-215; these read CYNR…KGQH and CKNG…KGTH. Residues 226–315 enclose the CS domain; the sequence is VVPCRHDWHQ…AEFMTWARLE (90 aa).

Functionally, regulates centrosome duplication. This Xenopus laevis (African clawed frog) protein is Cysteine and histidine-rich domain-containing protein 1 (chordc1).